We begin with the raw amino-acid sequence, 589 residues long: Coiled-coil domain-containing protein 22 homolog (589 aa).

Coiled coils occupy residues 287–426 (KTPL…LQTK) and 523–589 (CEEL…TSRQ). The tract at residues 568-589 (EMQNESQRLEESIRRMEVTSRQ) is disordered. Residues 574 to 589 (QRLEESIRRMEVTSRQ) are compositionally biased toward basic and acidic residues.

This sequence belongs to the CCDC22 family.

This chain is Coiled-coil domain-containing protein 22 homolog, found in Aedes aegypti (Yellowfever mosquito).